Here is a 369-residue protein sequence, read N- to C-terminus: MELSYYEILEVEKHSNQETIKKSYRKLALKYHPDRNAGDKEAEEKFKLINEAYGVLSDEKKRALYDRYGKKGLNQAGASQGDFSDFFEDLGSFFEDAFGFGARGSKRQKSSIAPDYLQTLELSFKEAVFGCKKTIKVQYQSVCESCDGTGAKDKALETCKQCNGQGQVFMRQGFMSFAQTCGACQGKGKIVKTPCQACKGKTYILKDEEIDAIIPEGIDDQNRMVLKNKGNEYEKGKRGDLYLEAQVKEDEHFKREGCDLFIKAPVFFTTIALGHTIKVPSLKGDELELKIPRNARDKQTFAFRNEGVKHPESSYRGSLIVELQVIYPKSLNKEQQELLEKLHASFGYEGEPHKSVLETCISKIKDWFK.

The 66-residue stretch at 4–69 (SYYEILEVEK…KKRALYDRYG (66 aa)) folds into the J domain. The CR-type zinc-finger motif lies at 130-207 (GCKKTIKVQY…CKGKTYILKD (78 aa)). Zn(2+)-binding residues include Cys-143, Cys-146, Cys-159, Cys-162, Cys-181, Cys-184, Cys-195, and Cys-198. 4 CXXCXGXG motif repeats span residues 143-150 (CESCDGTG), 159-166 (CKQCNGQG), 181-188 (CGACQGKG), and 195-202 (CQACKGKT).

The protein belongs to the DnaJ family. As to quaternary structure, homodimer. The cofactor is Zn(2+).

The protein resides in the cytoplasm. Functionally, participates actively in the response to hyperosmotic and heat shock by preventing the aggregation of stress-denatured proteins and by disaggregating proteins, also in an autonomous, DnaK-independent fashion. Unfolded proteins bind initially to DnaJ; upon interaction with the DnaJ-bound protein, DnaK hydrolyzes its bound ATP, resulting in the formation of a stable complex. GrpE releases ADP from DnaK; ATP binding to DnaK triggers the release of the substrate protein, thus completing the reaction cycle. Several rounds of ATP-dependent interactions between DnaJ, DnaK and GrpE are required for fully efficient folding. Also involved, together with DnaK and GrpE, in the DNA replication of plasmids through activation of initiation proteins. The chain is Chaperone protein DnaJ from Helicobacter pylori (strain ATCC 700392 / 26695) (Campylobacter pylori).